A 494-amino-acid polypeptide reads, in one-letter code: Ectonucleoside triphosphate diphosphohydrolase 8 (494 aa).

Topologically, residues 1 to 8 (MRLSWKER) are cytoplasmic. Residues 9 to 29 (VFMVLLGVAAASGLTMLILIL) traverse the membrane as a helical segment. Residues 30 to 465 (VKATNVLLPA…LTQWRAQSYS (436 aa)) are Extracellular-facing. A disulfide bond links Cys-78 and Cys-102. Glu-168 acts as the Proton acceptor in catalysis. Cysteines 245 and 291 form a disulfide. Asn-299 and Asn-303 each carry an N-linked (GlcNAc...) asparagine glycan. An intrachain disulfide couples Cys-328 to Cys-334. N-linked (GlcNAc...) asparagine glycosylation occurs at Asn-362. Cysteines 380 and 402 form a disulfide. The chain crosses the membrane as a helical span at residues 466–486 (IWIAGVVFAVLTLVAILGAAA). Topologically, residues 487–494 (VQLFWTQD) are cytoplasmic.

It belongs to the GDA1/CD39 NTPase family. It depends on Ca(2+) as a cofactor. The cofactor is Mg(2+). Post-translationally, N-glycosylated. Present in liver, and at lower level in jejunum and kidney. Limited to the canalicular domain of hepatocytes (at protein level).

It localises to the cell membrane. It carries out the reaction a ribonucleoside 5'-triphosphate + 2 H2O = a ribonucleoside 5'-phosphate + 2 phosphate + 2 H(+). Its function is as follows. Canalicular ectonucleoside NTPDase responsible for the main hepatic NTPDase activity. Ectonucleoside NTPDases catalyze the hydrolysis of gamma- and beta-phosphate residues of nucleotides, playing a central role in concentration of extracellular nucleotides. Has activity toward ATP, ADP, UTP and UDP, but not toward AMP. The protein is Ectonucleoside triphosphate diphosphohydrolase 8 (Entpd8) of Rattus norvegicus (Rat).